An 875-amino-acid polypeptide reads, in one-letter code: Probable dipeptidyl-aminopeptidase B (875 aa).

A disordered region spans residues 1 to 90 (MSEPKPIQDT…ASSETTPPRK (90 aa)). Residues 1–98 (MSEPKPIQDT…RKGVDRKLKK (98 aa)) are Cytoplasmic-facing. Low complexity predominate over residues 19 to 28 (SSISSASTTS). Over residues 33–46 (RLAEESEKNHDASS) the composition is skewed to basic and acidic residues. A helical; Signal-anchor for type II membrane protein transmembrane segment spans residues 99–119 (VLLIVGGFFVAAWIVSLVVFL). Topologically, residues 120–875 (TNKSYKHGSQ…VNDAKPKIES (756 aa)) are vacuolar. N-linked (GlcNAc...) asparagine glycans are attached at residues Asn-354 and Asn-567. Residues 689–715 (VDFQSSDGGRRTTRSPRRATGRPSATS) are disordered. The span at 699-708 (RTTRSPRRAT) shows a compositional bias: basic residues. Ser-726 serves as the catalytic Charge relay system. Asn-785 carries N-linked (GlcNAc...) asparagine glycosylation. Catalysis depends on charge relay system residues Asp-803 and His-836.

Belongs to the peptidase S9B family.

The protein localises to the vacuole membrane. It carries out the reaction Release of an N-terminal dipeptide, Xaa-Yaa-|-Zaa-, from a polypeptide, preferentially when Yaa is Pro, provided Zaa is neither Pro nor hydroxyproline.. Its function is as follows. Type IV dipeptidyl-peptidase which removes N-terminal dipeptides sequentially from polypeptides having unsubstituted N-termini provided that the penultimate residue is proline. In Verticillium alfalfae (strain VaMs.102 / ATCC MYA-4576 / FGSC 10136) (Verticillium wilt of alfalfa), this protein is Probable dipeptidyl-aminopeptidase B (DAPB).